Consider the following 109-residue polypeptide: Large ribosomal subunit protein uL24 (109 aa).

Belongs to the universal ribosomal protein uL24 family. In terms of assembly, part of the 50S ribosomal subunit.

In terms of biological role, one of two assembly initiator proteins, it binds directly to the 5'-end of the 23S rRNA, where it nucleates assembly of the 50S subunit. Its function is as follows. One of the proteins that surrounds the polypeptide exit tunnel on the outside of the subunit. The sequence is that of Large ribosomal subunit protein uL24 from Rickettsia akari (strain Hartford).